The sequence spans 258 residues: Protein CHAPERONE-LIKE PROTEIN OF POR1, chloroplastic (258 aa).

Residues 1-48 (MSSSLLLSGSTVSSSFIAPSKPSLVRNSSKTSLLPFRNVSRSFKTVKC) constitute a chloroplast transit peptide. Position 49 is an N-acetylthreonine (threonine 49). The segment at 67 to 122 (WDPYKRLGVSPYASEEEIWASRNFLLQQYAGHERSEESIEGAFEKLLMSSFIRRKK) is J-like domain required for holdase chaperone activity. The next 3 helical transmembrane spans lie at 162 to 182 (FLFA…GPAF), 207 to 227 (LIGI…IPMI), and 237 to 257 (TLEL…CTFL).

This sequence belongs to the chaperone-like protein of POR1 protein family. As to quaternary structure, interacts with PORB in chloroplast. Interacts with PORA during plastid import. In terms of tissue distribution, expressed ubiquitously with higher levels in young leaves, flowers, and the root elongation zone.

The protein localises to the mitochondrion membrane. The protein resides in the plastid. Its subcellular location is the chloroplast envelope. It is found in the chloroplast thylakoid membrane. Functionally, essential protein required during embryogenesis. Exhibits holdase chaperone activity involved in the stabilization of NADPH:protochlorophyllide oxidoreductase (POR) proteins against photooxidative stress during POR proteins import into chloroplasts. Required for chloroplast biogenesis and development. When expressed in yeast, triggers mitochondria-mediated cell death associated with the loss of mitochondrial membrane potential. This Arabidopsis thaliana (Mouse-ear cress) protein is Protein CHAPERONE-LIKE PROTEIN OF POR1, chloroplastic.